The chain runs to 216 residues: Ribosomal RNA large subunit methyltransferase E (216 aa).

Residues Gly-67, Trp-69, Asp-87, Asp-103, and Asp-128 each contribute to the S-adenosyl-L-methionine site. The active-site Proton acceptor is Lys-168.

It belongs to the class I-like SAM-binding methyltransferase superfamily. RNA methyltransferase RlmE family.

The protein resides in the cytoplasm. The enzyme catalyses uridine(2552) in 23S rRNA + S-adenosyl-L-methionine = 2'-O-methyluridine(2552) in 23S rRNA + S-adenosyl-L-homocysteine + H(+). In terms of biological role, specifically methylates the uridine in position 2552 of 23S rRNA at the 2'-O position of the ribose in the fully assembled 50S ribosomal subunit. This is Ribosomal RNA large subunit methyltransferase E from Acinetobacter baumannii (strain AB307-0294).